The chain runs to 157 residues: Protein TIFY 8 (157 aa).

A Tify domain is found at 33 to 68 (VPGTTEQLTIFYSGSMVKFDNVPREKIRYACRLRRL). The tract at residues 126-147 (SIGAQRTGTPPSRRRIHARGKS) is disordered. Over residues 137–147 (SRRRIHARGKS) the composition is skewed to basic residues.

The protein belongs to the TIFY/JAZ family. In terms of processing, ubiquitinated. Targeted for degradation by the SCF(COI1) E3 ubiquitin ligase-proteasome pathway during jasmonate signaling.

Its function is as follows. Repressor of jasmonate responses. The sequence is that of Protein TIFY 8 from Oryza sativa subsp. japonica (Rice).